Reading from the N-terminus, the 546-residue chain is Putative serine hydroxymethyltransferase, mitochondrial (546 aa).

Residues 1–64 (MSSFQSTAAV…RFSSSSIAND (64 aa)) constitute a mitochondrion transit peptide. Residue Lys305 is modified to N6-(pyridoxal phosphate)lysine.

It belongs to the SHMT family. In terms of assembly, homotetramer. Pyridoxal 5'-phosphate is required as a cofactor.

The protein localises to the mitochondrion. It carries out the reaction (6R)-5,10-methylene-5,6,7,8-tetrahydrofolate + glycine + H2O = (6S)-5,6,7,8-tetrahydrofolate + L-serine. It participates in one-carbon metabolism; tetrahydrofolate interconversion. In terms of biological role, interconversion of serine and glycine. The polypeptide is Putative serine hydroxymethyltransferase, mitochondrial (cbs-2) (Neurospora crassa (strain ATCC 24698 / 74-OR23-1A / CBS 708.71 / DSM 1257 / FGSC 987)).